The sequence spans 273 residues: MDWMELLKAVILGMVEGLTEFAPVSSTGHMIIVDDLWLKSTEFLGKYAANTFKVVIQLGSILAAVVVFKDRFLELLGIRGRHPGGKPRLTLLHVIIGLLPAGVLGVLFEDYIDEHLFSTKTVLIGLVLGALLMIVADRFAKKAARAQTVDQITYKQAFLVGLVQCLSLWPGFSRSGSTIAGGVLVGMSHRAAADFTFIMAVPIMAGASGLSLLKNWQYVTVADIPFFIAGFLSAFVFALLAIRFFLHLINRIRLVPFAVYRIALAFIIYFLYF.

Transmembrane regions (helical) follow at residues 48 to 68, 89 to 109, 116 to 136, 152 to 172, 193 to 213, 222 to 242, and 252 to 272; these read AANTFKVVIQLGSILAAVVVF, LTLLHVIIGLLPAGVLGVLFE, LFSTKTVLIGLVLGALLMIVA, ITYKQAFLVGLVQCLSLWPGF, ADFTFIMAVPIMAGASGLSLL, ADIPFFIAGFLSAFVFALLAI, and IRLVPFAVYRIALAFIIYFLY.

The protein belongs to the UppP family.

It localises to the cell membrane. The catalysed reaction is di-trans,octa-cis-undecaprenyl diphosphate + H2O = di-trans,octa-cis-undecaprenyl phosphate + phosphate + H(+). Catalyzes the dephosphorylation of undecaprenyl diphosphate (UPP). Confers resistance to bacitracin. This chain is Undecaprenyl-diphosphatase, found in Geobacillus thermodenitrificans (strain NG80-2).